A 1485-amino-acid polypeptide reads, in one-letter code: Cystic fibrosis transmembrane conductance regulator (1485 aa).

Residues 1–78 (MQRSPVEDAN…SLLRAMARCY (78 aa)) lie on the Cytoplasmic side of the membrane. Residues 79–99 (IKPFLLFGFLLYIGEATKTVQ) traverse the membrane as a helical segment. In terms of domain architecture, ABC transmembrane type-1 1 spans 83-353 (LLFGFLLYIG…CMVLRMTVTR (271 aa)). At 100–123 (PQLLGRIIASFDPAHEPERANGYF) the chain is on the extracellular side. The helical transmembrane segment at 124 to 149 (LAFGLGLLFTARFLLLQPAMFGLHHL) threads the bilayer. Residues 150–195 (GMQIRIALFSIIYKKTLKLSSRVLDKISTGQLVSLMSANLGKFDQS) lie on the Cytoplasmic side of the membrane. The helical transmembrane segment at 196–216 (LGMAHFIWISPLQCILCTGLI) threads the bilayer. Residues 217 to 224 (WELIDVNS) lie on the Extracellular side of the membrane. Residues 225–245 (FCALAAISLLGVLQAFLSHKM) traverse the membrane as a helical segment. At 246-299 (GPYKAQKVLLTNKRLALTSEIMENLHSVKAYGWEEIMETLIKNIRQDEVKLTRK) the chain is on the cytoplasmic side. A helical membrane pass occupies residues 300-320 (IGSLRYFYSSAYFFSAIFVIV). Topologically, residues 321 to 340 (AAVVPHALSRGINLRRIFTT) are extracellular. Residues 341–363 (LSYCMVLRMTVTRQLPGSIQMWY) form a helical membrane-spanning segment. Over 364 to 856 (DTMRLIWKIE…YVRYVSNNKS (493 aa)) the chain is Cytoplasmic. ATP-binding positions include tryptophan 402, 457-464 (GSMGSGKS), and glutamine 492. In terms of domain architecture, ABC transporter 1 spans 424–645 (NGDAGLFFTN…RPDFSSLLLG (222 aa)). The interval 653–826 (SAERRCSILT…GILEEENIEA (174 aa)) is disordered R region. Residues 857 to 877 (LLYVLIFILFIAAIEIAGSVA) form a helical membrane-spanning segment. In terms of domain architecture, ABC transmembrane type-1 2 spans 860–1163 (VLIFILFIAA…CVATSIAVDG (304 aa)). Residues 878–924 (GIFLITDELWREEHQRSEPNMTKHSNASSSGQTYAITVTPTSSYYIL) lie on the Extracellular side of the membrane. 2 N-linked (GlcNAc...) asparagine glycosylation sites follow: asparagine 897 and asparagine 903. The discontinuously helical transmembrane segment at 925 to 946 (YIYVATSESLLAMGFFRGLPFV) threads the bilayer. Over 947 to 996 (HTTITISKKLHQKMLHAVLSAPMSVLNTMKTGRIMNRFTKDMATIDDMLP) the chain is Cytoplasmic. Residues 997-1019 (LLMFDFVQLTVVVVGCILVVSIV) form a helical membrane-spanning segment. Residues 1020–1021 (RP) are Extracellular-facing. A helical transmembrane segment spans residues 1022–1042 (YIFLAATPLAIIFIVMRKYFL). At 1043-1103 (RTGQQLKQLE…TATWFLYLST (61 aa)) the chain is on the cytoplasmic side. The chain crosses the membrane as a helical span at residues 1104–1124 (LRWFLFRADILFVFFFTLAAW). Over 1125 to 1138 (IAVGTNQDKPGEIG) the chain is Extracellular. The helical transmembrane segment at 1139 to 1159 (IIICLAMLILGTFQWCVATSI) threads the bilayer. Residues 1160 to 1485 (AVDGMMRSVD…AEDNIQDTRL (326 aa)) are Cytoplasmic-facing. The 234-residue stretch at 1211–1444 (IEVRNLTVKY…TSHLKQAISP (234 aa)) folds into the ABC transporter 2 domain. ATP-binding positions include tyrosine 1220 and 1245–1252 (GRTGSGKS). A disordered region spans residues 1452-1485 (PRRNSSMRTPQSKLSSVTQTLQEEAEDNIQDTRL). Positions 1454 to 1473 (RNSSMRTPQSKLSSVTQTLQ) are enriched in polar residues. Residues 1474–1485 (EEAEDNIQDTRL) are compositionally biased toward acidic residues. Residues 1483–1485 (TRL) carry the PDZ-binding motif.

This sequence belongs to the ABC transporter superfamily. ABCC family. CFTR transporter (TC 3.A.1.202) subfamily. In terms of assembly, monomer; does not require oligomerization for channel activity. Interacts with cse1l; this interaction may down-regulate cftr activity. Phosphorylated; this activates the channel. Dephosphorylation strongly decreases ATPase activity. Phosphorylation at PKA sites activates the channel. Phosphorylation at PKC sites enhances the response to phosphorylation by PKA. In terms of tissue distribution, detected in gut epithelium (at protein level). Detected in kidney, spleen, intestine and liver. Detected in pancreatic duct epithelium at 5 dpf and throughout adult life.

It localises to the apical cell membrane. It is found in the early endosome membrane. The protein resides in the cell membrane. Its subcellular location is the recycling endosome membrane. The protein localises to the endoplasmic reticulum membrane. It carries out the reaction ATP + H2O + closed Cl(-) channel = ADP + phosphate + open Cl(-) channel.. The catalysed reaction is chloride(in) = chloride(out). It catalyses the reaction hydrogencarbonate(in) = hydrogencarbonate(out). The enzyme catalyses ATP + H2O = ADP + phosphate + H(+). In terms of biological role, epithelial ion channel that plays an important role in the regulation of epithelial ion and water transport and fluid homeostasis. Mediates the transport of chloride ions across the cell membrane. Possesses an intrinsic ATPase activity and utilizes ATP to gate its channel; the passive flow of anions through the channel is gated by cycles of ATP binding and hydrolysis by the ATP-binding domains. The ion channel is also permeable to HCO(3)(-); selectivity depends on the extracellular chloride concentration. Exerts its function also by modulating the activity of other ion channels and transporters. Contributes to the regulation of the pH and the ion content of the epithelial fluid layer. Required for normal fluid homeostasis in the gut. Required for normal volume expansion and cell shape changes of Kupffer's vesicle during embryonic development and for normal establishment of left-right body patterning. Required for normal resistance to infection by P.aeruginosa strain PA14 and strain SMC573. The polypeptide is Cystic fibrosis transmembrane conductance regulator (Danio rerio (Zebrafish)).